Reading from the N-terminus, the 330-residue chain is D-alanine--D-alanine ligase (330 aa).

Positions 120 to 326 constitute an ATP-grasp domain; the sequence is KLWYDALGIP…FKTFLQKAVL (207 aa). 150-205 provides a ligand contact to ATP; the sequence is AFKQWGGLFVKAACQGSSVGCYKVTSEAELSKAINDAFGYSQQVLVEKAVKPRELE. The Mg(2+) site is built by Asp-280, Glu-293, and Asn-295.

This sequence belongs to the D-alanine--D-alanine ligase family. Mg(2+) serves as cofactor. Requires Mn(2+) as cofactor.

The protein localises to the cytoplasm. The catalysed reaction is 2 D-alanine + ATP = D-alanyl-D-alanine + ADP + phosphate + H(+). It functions in the pathway cell wall biogenesis; peptidoglycan biosynthesis. Its function is as follows. Cell wall formation. In Aliivibrio fischeri (strain ATCC 700601 / ES114) (Vibrio fischeri), this protein is D-alanine--D-alanine ligase.